Consider the following 288-residue polypeptide: Diaminopimelate epimerase (288 aa).

N14 and N67 together coordinate substrate. C76 serves as the catalytic Proton donor. Residues 77–78 (GN), N166, N199, and 217–218 (ER) each bind substrate. C226 acts as the Proton acceptor in catalysis. Residue 227 to 228 (GT) participates in substrate binding.

The protein belongs to the diaminopimelate epimerase family. As to quaternary structure, homodimer.

It localises to the cytoplasm. The enzyme catalyses (2S,6S)-2,6-diaminopimelate = meso-2,6-diaminopimelate. It functions in the pathway amino-acid biosynthesis; L-lysine biosynthesis via DAP pathway; DL-2,6-diaminopimelate from LL-2,6-diaminopimelate: step 1/1. In terms of biological role, catalyzes the stereoinversion of LL-2,6-diaminopimelate (L,L-DAP) to meso-diaminopimelate (meso-DAP), a precursor of L-lysine and an essential component of the bacterial peptidoglycan. The sequence is that of Diaminopimelate epimerase from Bacillus cereus (strain ATCC 10987 / NRS 248).